The primary structure comprises 456 residues: Signal recognition particle 54 kDa protein (456 aa).

GTP-binding positions include 104-111 (GLYGNGKT), 184-188 (DTSGR), and 242-245 (TKMD).

Belongs to the GTP-binding SRP family. SRP54 subfamily. Part of the signal recognition particle protein translocation system, which is composed of SRP and FtsY. Archaeal SRP consists of a 7S RNA molecule of 300 nucleotides and two protein subunits: SRP54 and SRP19.

The protein localises to the cytoplasm. It carries out the reaction GTP + H2O = GDP + phosphate + H(+). Functionally, involved in targeting and insertion of nascent membrane proteins into the cytoplasmic membrane. Binds to the hydrophobic signal sequence of the ribosome-nascent chain (RNC) as it emerges from the ribosomes. The SRP-RNC complex is then targeted to the cytoplasmic membrane where it interacts with the SRP receptor FtsY. The chain is Signal recognition particle 54 kDa protein from Thermoplasma acidophilum (strain ATCC 25905 / DSM 1728 / JCM 9062 / NBRC 15155 / AMRC-C165).